The following is a 157-amino-acid chain: SsrA-binding protein (157 aa).

The disordered stretch occupies residues 130 to 157 (KAEHDKRDTIKEREGKREVERVMKSRHR).

The protein belongs to the SmpB family.

The protein localises to the cytoplasm. In terms of biological role, required for rescue of stalled ribosomes mediated by trans-translation. Binds to transfer-messenger RNA (tmRNA), required for stable association of tmRNA with ribosomes. tmRNA and SmpB together mimic tRNA shape, replacing the anticodon stem-loop with SmpB. tmRNA is encoded by the ssrA gene; the 2 termini fold to resemble tRNA(Ala) and it encodes a 'tag peptide', a short internal open reading frame. During trans-translation Ala-aminoacylated tmRNA acts like a tRNA, entering the A-site of stalled ribosomes, displacing the stalled mRNA. The ribosome then switches to translate the ORF on the tmRNA; the nascent peptide is terminated with the 'tag peptide' encoded by the tmRNA and targeted for degradation. The ribosome is freed to recommence translation, which seems to be the essential function of trans-translation. The chain is SsrA-binding protein from Acidovorax sp. (strain JS42).